A 334-amino-acid polypeptide reads, in one-letter code: Pantothenate synthetase (334 aa).

34-41 (MGALHEGH) serves as a coordination point for ATP. The active-site Proton donor is the H41. Q71 contributes to the (R)-pantoate binding site. Q71 contacts beta-alanine. 158–161 (GQKD) provides a ligand contact to ATP. Q164 contacts (R)-pantoate. Residues V187 and 195 to 198 (LSSR) contribute to the ATP site. Residues 288-334 (PLMLGTRGPAGEASPPNRERSEPGSAEQNKSPGEARTTPSGTSEASE) are disordered. The span at 313-334 (AEQNKSPGEARTTPSGTSEASE) shows a compositional bias: polar residues.

Belongs to the pantothenate synthetase family. In terms of assembly, homodimer.

Its subcellular location is the cytoplasm. The catalysed reaction is (R)-pantoate + beta-alanine + ATP = (R)-pantothenate + AMP + diphosphate + H(+). It participates in cofactor biosynthesis; (R)-pantothenate biosynthesis; (R)-pantothenate from (R)-pantoate and beta-alanine: step 1/1. Functionally, catalyzes the condensation of pantoate with beta-alanine in an ATP-dependent reaction via a pantoyl-adenylate intermediate. The protein is Pantothenate synthetase of Nocardioides sp. (strain ATCC BAA-499 / JS614).